Here is a 294-residue protein sequence, read N- to C-terminus: Nucleoside-specific channel-forming protein Tsx (294 aa).

The N-terminal stretch at 1 to 22 (MKKTLLAASAVVALSASFTAGA) is a signal peptide.

Belongs to the nucleoside-specific channel-forming outer membrane porin (Tsx) (TC 1.B.10) family.

It is found in the cell outer membrane. In terms of biological role, functions as a substrate-specific channel for nucleosides and deoxynucleosides. Also functions in albicidin uptake and as receptor for colicin K. Also is a receptor for several Tsx-specific bacteriophages. The sequence is that of Nucleoside-specific channel-forming protein Tsx from Klebsiella aerogenes (strain ATCC 13048 / DSM 30053 / CCUG 1429 / JCM 1235 / KCTC 2190 / NBRC 13534 / NCIMB 10102 / NCTC 10006 / CDC 819-56) (Enterobacter aerogenes).